We begin with the raw amino-acid sequence, 128 residues long: Disintegrin ocellatusin (128 aa).

The signal sequence occupies residues 1-20; the sequence is MIPVLLVTICLAVFPFQGSS. Positions 21-65 are excised as a propeptide; sequence IILESGNINDYEIVYPKKVAVLPTGAMNSAHPCYDPVTCQPKEKE. One can recognise a Disintegrin domain in the interval 26-112; the sequence is GNINDYEIVY…DCPRNPYKGE (87 aa). Disulfide bonds link Cys-53–Cys-59, Cys-67–Cys-76, Cys-72–Cys-97, Cys-73–Cys-102, and Cys-85–Cys-104. The short motif at 89 to 91 is the Cell attachment site element; sequence RGD. Residues 116–128 constitute a propeptide that is removed on maturation; that stretch reads MEWPAPAKGSVLM.

Monomer. In terms of tissue distribution, expressed by the venom gland.

It is found in the secreted. Its function is as follows. The disintegrin ocellatusin-10c1 is a poor inhibitor of platelet aggregation. The disintegrin inhibits the adhesion of cells expressing the RGD-dependent integrin alpha-5/beta-1 (ITGA5/ITGB1) to immobilized fibronectin. Inhibition on alpha-2b/beta-3 (ITGA2B/ITGB3) is low, and there is no inhibition on alpha-1/beta-1 (ITGA1/ITGB1), alpha-2/beta-1 (ITGA2/ITGB1) and alpha-6/beta-1 (ITGA6/ITGB1). Functionally, the short monomeric disintegrin ocellatusin inhibits ADP-induced platelet aggregation (IC(50)=168 nM). Inhibits alpha-5/beta-1 (ITGA5/ITGB1) integrin and induces the expression of a ligand-induced binding site epitope on beta-1 integrin subunit. Has a direct chemotactic stimulus on human neutrophils in vitro. In Echis ocellatus (Ocellated saw-scaled viper), this protein is Disintegrin ocellatusin.